Reading from the N-terminus, the 217-residue chain is Probable transaldolase (217 aa).

The active-site Schiff-base intermediate with substrate is Lys-83.

The protein belongs to the transaldolase family. Type 3B subfamily.

It localises to the cytoplasm. The catalysed reaction is D-sedoheptulose 7-phosphate + D-glyceraldehyde 3-phosphate = D-erythrose 4-phosphate + beta-D-fructose 6-phosphate. The protein operates within carbohydrate degradation; pentose phosphate pathway; D-glyceraldehyde 3-phosphate and beta-D-fructose 6-phosphate from D-ribose 5-phosphate and D-xylulose 5-phosphate (non-oxidative stage): step 2/3. In terms of biological role, transaldolase is important for the balance of metabolites in the pentose-phosphate pathway. The chain is Probable transaldolase from Bartonella bacilliformis (strain ATCC 35685 / KC583 / Herrer 020/F12,63).